The sequence spans 547 residues: Dihydroxy-acid dehydratase (547 aa).

Aspartate 78 contacts Mg(2+). Cysteine 119 contacts [2Fe-2S] cluster. Residues aspartate 120 and lysine 121 each contribute to the Mg(2+) site. N6-carboxylysine is present on lysine 121. Residue cysteine 191 coordinates [2Fe-2S] cluster. Glutamate 439 lines the Mg(2+) pocket. The Proton acceptor role is filled by serine 464.

Belongs to the IlvD/Edd family. Homodimer. The cofactor is [2Fe-2S] cluster. Requires Mg(2+) as cofactor.

The catalysed reaction is (2R)-2,3-dihydroxy-3-methylbutanoate = 3-methyl-2-oxobutanoate + H2O. It catalyses the reaction (2R,3R)-2,3-dihydroxy-3-methylpentanoate = (S)-3-methyl-2-oxopentanoate + H2O. It participates in amino-acid biosynthesis; L-isoleucine biosynthesis; L-isoleucine from 2-oxobutanoate: step 3/4. The protein operates within amino-acid biosynthesis; L-valine biosynthesis; L-valine from pyruvate: step 3/4. Its function is as follows. Functions in the biosynthesis of branched-chain amino acids. Catalyzes the dehydration of (2R,3R)-2,3-dihydroxy-3-methylpentanoate (2,3-dihydroxy-3-methylvalerate) into 2-oxo-3-methylpentanoate (2-oxo-3-methylvalerate) and of (2R)-2,3-dihydroxy-3-methylbutanoate (2,3-dihydroxyisovalerate) into 2-oxo-3-methylbutanoate (2-oxoisovalerate), the penultimate precursor to L-isoleucine and L-valine, respectively. The polypeptide is Dihydroxy-acid dehydratase (Archaeoglobus fulgidus (strain ATCC 49558 / DSM 4304 / JCM 9628 / NBRC 100126 / VC-16)).